We begin with the raw amino-acid sequence, 252 residues long: Flap endonuclease Xni (252 aa).

Asp-103 provides a ligand contact to Mg(2+). In terms of domain architecture, 5'-3' exonuclease spans Val-159–Leu-248. Residues Leu-170, Ala-171, Pro-179, Ile-181, and Ile-184 each contribute to the K(+) site. The interval Gly-183 to Thr-188 is interaction with DNA.

This sequence belongs to the Xni family. It depends on Mg(2+) as a cofactor. Requires K(+) as cofactor.

Has flap endonuclease activity. During DNA replication, flap endonucleases cleave the 5'-overhanging flap structure that is generated by displacement synthesis when DNA polymerase encounters the 5'-end of a downstream Okazaki fragment. This is Flap endonuclease Xni from Photorhabdus laumondii subsp. laumondii (strain DSM 15139 / CIP 105565 / TT01) (Photorhabdus luminescens subsp. laumondii).